Reading from the N-terminus, the 238-residue chain is Synapse differentiation-inducing gene protein 1-like (238 aa).

Disordered stretches follow at residues 1-24 (MESLSELQNPLLPRSPTHLHGPYP), 78-111 (KVKEPRPGSCETSFTEGREPPAGPTERSTEPGQA), and 126-155 (EEFQGQEGDPEEEESDATSTESESEDNFLT). Topologically, residues 1 to 162 (MESLSELQNP…FLTLPPRDHL (162 aa)) are extracellular. Residues 133–151 (GDPEEEESDATSTESESED) are compositionally biased toward acidic residues. Residues 163–183 (GLTIFSMLCCFWPLGIAAFYF) traverse the membrane as a helical segment. Residues 184 to 205 (SQGTSKAISKGDFRLANTTSRR) are Cytoplasmic-facing. A helical transmembrane segment spans residues 206 to 226 (ALFLATLSIAVGAGLYVAVVV). The Extracellular portion of the chain corresponds to 227–238 (ALAAYMSQNGHS).

The protein belongs to the CD225/Dispanin family.

Its subcellular location is the membrane. The protein resides in the golgi apparatus. It is found in the cis-Golgi network. In Bos taurus (Bovine), this protein is Synapse differentiation-inducing gene protein 1-like (SYNDIG1L).